The chain runs to 452 residues: tRNA modification GTPase MnmE (452 aa).

Positions 21, 78, and 118 each coordinate (6S)-5-formyl-5,6,7,8-tetrahydrofolate. Positions 214 to 375 (GMKAVIAGRP…LREHLKTSMG (162 aa)) constitute a TrmE-type G domain. K(+) is bound at residue Asn-224. Residues 224–229 (NAGKSS), 243–249 (TNIAGTT), and 268–271 (DTAG) contribute to the GTP site. A Mg(2+)-binding site is contributed by Ser-228. 3 residues coordinate K(+): Thr-243, Ile-245, and Thr-248. Residue Thr-249 coordinates Mg(2+). Lys-452 serves as a coordination point for (6S)-5-formyl-5,6,7,8-tetrahydrofolate.

The protein belongs to the TRAFAC class TrmE-Era-EngA-EngB-Septin-like GTPase superfamily. TrmE GTPase family. Homodimer. Heterotetramer of two MnmE and two MnmG subunits. It depends on K(+) as a cofactor.

It localises to the cytoplasm. In terms of biological role, exhibits a very high intrinsic GTPase hydrolysis rate. Involved in the addition of a carboxymethylaminomethyl (cmnm) group at the wobble position (U34) of certain tRNAs, forming tRNA-cmnm(5)s(2)U34. This Haemophilus ducreyi (strain 35000HP / ATCC 700724) protein is tRNA modification GTPase MnmE.